A 285-amino-acid polypeptide reads, in one-letter code: Ubiquinone biosynthesis protein COQ4, mitochondrial (285 aa).

The N-terminal 11 residues, 1 to 11, are a transit peptide targeting the mitochondrion; that stretch reads MPPAVRQGMRT. Zn(2+)-binding residues include His166, Asp167, His170, and Glu182.

It belongs to the COQ4 family. As to quaternary structure, component of a multi-subunit COQ enzyme complex, composed of at least COQ3, COQ4, COQ5, COQ6, COQ7 and COQ9. Requires Zn(2+) as cofactor.

It localises to the mitochondrion inner membrane. The enzyme catalyses a 4-hydroxy-3-methoxy-5-(all-trans-polyprenyl)benzoate + H(+) = a 2-methoxy-6-(all-trans-polyprenyl)phenol + CO2. Its pathway is cofactor biosynthesis; ubiquinone biosynthesis. Lyase that catalyzes the C1-decarboxylation of 4-hydroxy-3-methoxy-5-(all-trans-polyprenyl)benzoic acid into 2-methoxy-6-(all-trans-polyprenyl)phenol during ubiquinone biosynthesis. The polypeptide is Ubiquinone biosynthesis protein COQ4, mitochondrial (Paracoccidioides lutzii (strain ATCC MYA-826 / Pb01) (Paracoccidioides brasiliensis)).